Reading from the N-terminus, the 193-residue chain is Interleukin-18 (193 aa).

Positions M1 to D36 are excised as a propeptide.

Belongs to the IL-1 family. Forms a ternary complex with ligand-binding receptor subunit IL18R1 and signaling receptor subunit IL18RAP at the plasma membrane. Mature IL18 first binds to IL18R1 forming a low affinity binary complex, which then interacts with IL18RAP to form a high affinity ternary complex that signals inside the cell. Interacts with cargo receptor TMED10; the interaction mediates the translocation from the cytoplasm into the ERGIC (endoplasmic reticulum-Golgi intermediate compartment) and thereby secretion. Post-translationally, the pro-IL-18 precursor is processed by CASP1, CASP4 or CASP5 to yield its mature, active form. The pro-IL-18 precursor features autoinhibitory interactions between the propeptide and the post-cleavage-site region, preventing recognition by the IL18R1 receptor. Processing by CASP1, CASP4 or CASP5 induces conformational changes to generate critical receptor-binding sites. The mature form is then secreted and released in the extracellular milieu by passing through the gasdermin-D (GSDMD) pore. In contrast, cleavage by CASP3 inactivates IL18.

The protein localises to the cytoplasm. The protein resides in the cytosol. It is found in the secreted. Functionally, pro-inflammatory cytokine primarily involved in epithelial barrier repair, polarized T-helper 1 (Th1) cell and natural killer (NK) cell immune responses. Upon binding to IL18R1 and IL18RAP, forms a signaling ternary complex which activates NF-kappa-B, triggering synthesis of inflammatory mediators. Synergizes with IL12/interleukin-12 to induce IFNG synthesis from T-helper 1 (Th1) cells and natural killer (NK) cells. Involved in transduction of inflammation downstream of pyroptosis: its mature form is specifically released in the extracellular milieu by passing through the gasdermin-D (GSDMD) pore. The polypeptide is Interleukin-18 (IL18) (Canis lupus familiaris (Dog)).